A 594-amino-acid chain; its full sequence is DNA ligase (594 aa).

NAD(+) is bound by residues 32-36 (DEEYD), 81-82 (SL), and glutamate 118. Lysine 120 serves as the catalytic N6-AMP-lysine intermediate. Arginine 141, glutamate 181, lysine 299, and lysine 323 together coordinate NAD(+). Positions 417, 420, 436, and 442 each coordinate Zn(2+).

This sequence belongs to the NAD-dependent DNA ligase family. LigA subfamily. The cofactor is Mg(2+). Mn(2+) is required as a cofactor.

The catalysed reaction is NAD(+) + (deoxyribonucleotide)n-3'-hydroxyl + 5'-phospho-(deoxyribonucleotide)m = (deoxyribonucleotide)n+m + AMP + beta-nicotinamide D-nucleotide.. Functionally, DNA ligase that catalyzes the formation of phosphodiester linkages between 5'-phosphoryl and 3'-hydroxyl groups in double-stranded DNA using NAD as a coenzyme and as the energy source for the reaction. It is essential for DNA replication and repair of damaged DNA. The sequence is that of DNA ligase from Blochmanniella floridana.